A 201-amino-acid chain; its full sequence is Small ribosomal subunit protein uS4c (201 aa).

A disordered region spans residues 15–43 (LGALPGLTNKRPRAGSDLRNQSRSGKRSQ). The S4 RNA-binding domain maps to 89 to 149 (MRLDNILFRL…DEQKSIALIQ (61 aa)).

In terms of assembly, component of the chloroplast small ribosomal subunit (SSU). Mature 70S chloroplast ribosomes of higher plants consist of a small (30S) and a large (50S) subunit. The 30S small subunit contains 1 molecule of ribosomal RNA (16S rRNA) and 24 different proteins. The 50S large subunit contains 3 rRNA molecules (23S, 5S and 4.5S rRNA) and 33 different proteins.

It is found in the plastid. The protein localises to the chloroplast. Its function is as follows. Component of the chloroplast ribosome (chloro-ribosome), a dedicated translation machinery responsible for the synthesis of chloroplast genome-encoded proteins, including proteins of the transcription and translation machinery and components of the photosynthetic apparatus. This Spinacia oleracea (Spinach) protein is Small ribosomal subunit protein uS4c (rps4).